We begin with the raw amino-acid sequence, 320 residues long: Malate dehydrogenase (320 aa).

NAD(+) contacts are provided by residues Gly-10–Gly-15 and Asp-34. Residues Arg-83 and Arg-89 each coordinate substrate. Residues Asn-96 and Ile-119–Asn-121 contribute to the NAD(+) site. Positions 121 and 152 each coordinate substrate. Catalysis depends on His-176, which acts as the Proton acceptor.

The protein belongs to the LDH/MDH superfamily. MDH type 3 family.

It catalyses the reaction (S)-malate + NAD(+) = oxaloacetate + NADH + H(+). Functionally, catalyzes the reversible oxidation of malate to oxaloacetate. The sequence is that of Malate dehydrogenase from Methylorubrum populi (strain ATCC BAA-705 / NCIMB 13946 / BJ001) (Methylobacterium populi).